The primary structure comprises 101 residues: Small ribosomal subunit protein uS14 (101 aa).

It belongs to the universal ribosomal protein uS14 family. In terms of assembly, part of the 30S ribosomal subunit. Contacts proteins S3 and S10.

Its function is as follows. Binds 16S rRNA, required for the assembly of 30S particles and may also be responsible for determining the conformation of the 16S rRNA at the A site. In Baumannia cicadellinicola subsp. Homalodisca coagulata, this protein is Small ribosomal subunit protein uS14.